Reading from the N-terminus, the 103-residue chain is Large ribosomal subunit protein bL21 (103 aa).

It belongs to the bacterial ribosomal protein bL21 family. In terms of assembly, part of the 50S ribosomal subunit. Contacts protein L20.

Its function is as follows. This protein binds to 23S rRNA in the presence of protein L20. The sequence is that of Large ribosomal subunit protein bL21 from Salmonella agona (strain SL483).